The following is a 185-amino-acid chain: Ribulose bisphosphate carboxylase small subunit, chloroplastic 2 (185 aa).

Residues Met1–Gln45 constitute a chloroplast transit peptide. Met46 is modified (N-methylmethionine).

This sequence belongs to the RuBisCO small chain family. As to quaternary structure, heterohexadecamer of 8 large and 8 small subunits.

The protein localises to the plastid. It is found in the chloroplast. The protein resides in the chloroplast stroma. Functionally, ruBisCO catalyzes two reactions: the carboxylation of D-ribulose 1,5-bisphosphate, the primary event in carbon dioxide fixation, as well as the oxidative fragmentation of the pentose substrate. Both reactions occur simultaneously and in competition at the same active site. Although the small subunit is not catalytic it is essential for maximal activity. This is Ribulose bisphosphate carboxylase small subunit, chloroplastic 2 from Chlamydomonas reinhardtii (Chlamydomonas smithii).